Consider the following 228-residue polypeptide: Sodium channel regulatory subunit beta-4 (228 aa).

Residues 1–30 form the signal peptide; sequence MSRAGNRGNTQARWLGTGLLGLFLLPMYLS. One can recognise an Ig-like C2-type domain in the interval 31-148; that stretch reads LEVSVGKATT…KDLNNSATIF (118 aa). Residues 31-161 lie on the Extracellular side of the membrane; sequence LEVSVGKATT…VDKLEKVDNT (131 aa). N-linked (GlcNAc...) asparagine glycosylation is found at asparagine 45, asparagine 71, asparagine 113, and asparagine 142. Cysteines 53 and 131 form a disulfide. The helical transmembrane segment at 162-182 threads the bilayer; sequence VTLIILAVVGGVIGLLVCILL. Topologically, residues 183–228 are cytoplasmic; sequence LKKLITFILKKTREKKKECLVSSSGNDNTENGLPGSKAEEKPPTKV. Positions 199-228 are disordered; sequence KECLVSSSGNDNTENGLPGSKAEEKPPTKV. The span at 203-213 shows a compositional bias: polar residues; sequence VSSSGNDNTEN. Basic and acidic residues predominate over residues 219-228; the sequence is KAEEKPPTKV.

The protein belongs to the sodium channel auxiliary subunit SCN4B (TC 8.A.17) family. In terms of assembly, a voltage-gated sodium (Nav) channel consists of an ion-conducting pore-forming alpha subunit functional on its own that is regulated by one or more beta subunits. The beta subunit SCN4B is disulfide-linked to the pore-forming alpha subunit. Interacts with SCN1A; regulatory subunit of SCN1A/Nav1.1. Interacts with SCN2A; regulatory subunit of SCN2A/Nav1.2. Post-translationally, contains an interchain disulfide bond with SCN2A.

Its subcellular location is the cell membrane. In terms of biological role, regulatory subunit of multiple voltage-gated sodium (Nav) channels directly mediating the depolarization of excitable membranes. Navs, also called VGSCs (voltage-gated sodium channels) or VDSCs (voltage-dependent sodium channels), operate by switching between closed and open conformations depending on the voltage difference across the membrane. In the open conformation they allow Na(+) ions to selectively pass through the pore, along their electrochemical gradient. The influx of Na+ ions provokes membrane depolarization, initiating the propagation of electrical signals throughout cells and tissues. The accessory beta subunits participate in localization and functional modulation of the Nav channels. Modulates the activity of SCN1A/Nav1.1. Modulates the activity of SCN2A/Nav1.2. This is Sodium channel regulatory subunit beta-4 from Mus musculus (Mouse).